We begin with the raw amino-acid sequence, 157 residues long: 2-C-methyl-D-erythritol 2,4-cyclodiphosphate synthase (157 aa).

A divalent metal cation-binding residues include Asp-8 and His-10. 4-CDP-2-C-methyl-D-erythritol 2-phosphate contacts are provided by residues 8-10 (DIH) and 34-35 (HS). A divalent metal cation is bound at residue His-42. 4-CDP-2-C-methyl-D-erythritol 2-phosphate-binding positions include 56-58 (DIG) and 132-135 (TTNE).

This sequence belongs to the IspF family. As to quaternary structure, homotrimer. It depends on a divalent metal cation as a cofactor.

It carries out the reaction 4-CDP-2-C-methyl-D-erythritol 2-phosphate = 2-C-methyl-D-erythritol 2,4-cyclic diphosphate + CMP. Its pathway is isoprenoid biosynthesis; isopentenyl diphosphate biosynthesis via DXP pathway; isopentenyl diphosphate from 1-deoxy-D-xylulose 5-phosphate: step 4/6. Functionally, involved in the biosynthesis of isopentenyl diphosphate (IPP) and dimethylallyl diphosphate (DMAPP), two major building blocks of isoprenoid compounds. Catalyzes the conversion of 4-diphosphocytidyl-2-C-methyl-D-erythritol 2-phosphate (CDP-ME2P) to 2-C-methyl-D-erythritol 2,4-cyclodiphosphate (ME-CPP) with a corresponding release of cytidine 5-monophosphate (CMP). The sequence is that of 2-C-methyl-D-erythritol 2,4-cyclodiphosphate synthase from Synechococcus sp. (strain JA-3-3Ab) (Cyanobacteria bacterium Yellowstone A-Prime).